Reading from the N-terminus, the 232-residue chain is MVTVLMHDMFHAGVHFGHQTRYWNPRMKPFIFGVRNKIHIINLEQTAPMFNNALFELNKIASRKGKILFVGTKRAASEAIKEAARSCDQFFVNHRWLGGMLTNWKTVRQSIKHLKELETQSQDGTLDKLTKKEAIICNRKLEKLEKSLGGIKDLGGLPDALFVIDAEREKIAVKEANNLGIPVFAVVDTNTDPNGIDFIIPGNDDAIRAINLYLTAVAHAISEGHQKNALEI.

The protein belongs to the universal ribosomal protein uS2 family.

This chain is Small ribosomal subunit protein uS2, found in Baumannia cicadellinicola subsp. Homalodisca coagulata.